An 891-amino-acid polypeptide reads, in one-letter code: MLPVEVPLSHLGPPILLLLQLLLPPTSAFFPNIWSLLAAPGSVTHQDLTEEAALNVTLVLFLEQPHPGRPRLHVEDYRGRTLLADDIFAAYFGPGFSSRRFRAALGEVSRANAAQDFLPAFKSNPDLHFDAERLVQGRTRLVGALRETLVAARALEYTLARQRLGAALHALQDFYSHSNWVELGERQPHPHLLWPRQELWSLAQVGDPTCSDCEGLSCPGNMLDSTLLTSGYFGMHPPKPPGKCSHGGHFDQSSSQPPRGGINKDSTSPSFSPHHKLHLQAAEVALLASIEAFSLLRSRLGDKAFSRLLDITPASSLSFVLDTTGSMGEEINAAKIQARRIVEQRQGSPMEPVFYILVPFHDPGFGPVFTTSDPDSFWQKLNEIHALGGGDEPEMCLSALELALLHTPPLSDIFVFTDASPKDALLTNRVESLTRERRCRVTFLVTEDPSRTGGRRRREALSPLRFEPYEAIARASGGEVIFTKDQYIQDVAAIVGESMAGLVTLPLDPPVFTPGEPCVFSVDSLLWQVTVRMHGDISSFWIKSPAGVSQGPEEGIGPLGHTRRFGQFWTVTMTDPPRTGTWEIQVAAAGTPRVRVQAQTSLDFLFHFGISVEDGPHPGLYPLTQPVAGLQTQLLVEVTGLTSRQKLVGGQPQFSHVVLRRVPEGTQLGRVSLEPVGPPVRGLLAASLPPTLLSVSSPFSLELVGQGGGGESLRRTAPQPCSVAPVLLELSGPPDFLTPGSKAPLSLHIVSFSGPQDLDLRTSVNPSFSLTSNLSRARLGLNESAWGRLWLEVPDSAAPDSVVMVTVTAAGQGASQVPPTHAFLRLLVLAQSSKDQLDGPAHSAAPVLPPVSPALLPSTLVTQGRAGGGMAGKAWWGTVGGVLFLLGCTSW.

A signal peptide spans 1–28 (MLPVEVPLSHLGPPILLLLQLLLPPTSA). The N-linked (GlcNAc...) asparagine glycan is linked to asparagine 55. The disordered stretch occupies residues 238 to 273 (PKPPGKCSHGGHFDQSSSQPPRGGINKDSTSPSFSP). The 186-residue stretch at 314–499 (ASSLSFVLDT…DVAAIVGESM (186 aa)) folds into the VWFA domain.

In terms of tissue distribution, expressed at low level in many tissues.

The protein localises to the secreted. The chain is von Willebrand factor A domain-containing protein 7 (Vwa7) from Mus musculus (Mouse).